Here is a 221-residue protein sequence, read N- to C-terminus: Probable septum site-determining protein MinC (221 aa).

It belongs to the MinC family. Interacts with MinD and FtsZ.

In terms of biological role, cell division inhibitor that blocks the formation of polar Z ring septums. Rapidly oscillates between the poles of the cell to destabilize FtsZ filaments that have formed before they mature into polar Z rings. Prevents FtsZ polymerization. The sequence is that of Probable septum site-determining protein MinC from Shewanella woodyi (strain ATCC 51908 / MS32).